The primary structure comprises 245 residues: MNTVIADFTERAGTGRVLKAEPEAIQLAPEQTALIVVDMQNAYTSIGGYLDLAGFDVSKTKPVVENIQKAVTAAHAAGIQVIYFKNGWDNQYVEAGGAGSPNFHKSNALKTMRKQPELQGKLLAKGGWDFELIDELQPKSQDIVIEKPRYSGFFNTALDSMLRARGIRNLVFVGIATNVCVESTLRDGFFLEYFGVALDDACYQAGPVEMHRASMYNIKTFFGWVSDTQSFVNTFQHNQQLAKTA.

The Proton acceptor role is filled by Asp-38. Lys-147 is a catalytic residue. The active-site Nucleophile is Cys-180.

Belongs to the isochorismatase family. RutB subfamily.

The catalysed reaction is (Z)-3-ureidoacrylate + H2O + H(+) = (Z)-3-aminoacrylate + NH4(+) + CO2. The enzyme catalyses (Z)-3-ureidoacrylate + H2O = (Z)-3-aminoacrylate + carbamate + H(+). It carries out the reaction (Z)-2-methylureidoacrylate + H2O + H(+) = (Z)-2-methylaminoacrylate + NH4(+) + CO2. In terms of biological role, hydrolyzes ureidoacrylate to form aminoacrylate and carbamate. The carbamate hydrolyzes spontaneously, thereby releasing one of the nitrogen atoms of the pyrimidine ring as ammonia and one of its carbon atoms as CO2. This is Ureidoacrylate amidohydrolase RutB from Acinetobacter baylyi (strain ATCC 33305 / BD413 / ADP1).